The primary structure comprises 418 residues: CinA-like protein (418 aa).

Belongs to the CinA family.

The chain is CinA-like protein from Leptospira borgpetersenii serovar Hardjo-bovis (strain L550).